Consider the following 317-residue polypeptide: Mitochondrial outer membrane protein porin 4 (317 aa).

Positions 1 to 30 are disordered; that stretch reads MEAETECKVPGVYSETGIPVEDPAPGLNSD.

Belongs to the eukaryotic mitochondrial porin (TC 1.B.8.1) family.

It is found in the mitochondrion outer membrane. In terms of biological role, forms a channel through the mitochondrial outer membrane that allows diffusion of small hydrophilic molecules. The channel adopts an open conformation at low or zero membrane potential and a closed conformation at potentials above 30-40 mV. The open state has a weak anion selectivity whereas the closed state is cation-selective. This is Mitochondrial outer membrane protein porin 4 (VDAC4) from Oryza sativa subsp. japonica (Rice).